Reading from the N-terminus, the 228-residue chain is uncharacterized protein (228 aa).

Residues 1–23 form the signal peptide; sequence MIRHTRLLLASLCLIATGARASA.

This is an uncharacterized protein from Methylorubrum extorquens (strain ATCC 14718 / DSM 1338 / JCM 2805 / NCIMB 9133 / AM1) (Methylobacterium extorquens).